A 311-amino-acid polypeptide reads, in one-letter code: GPN-loop GTPase 2 (311 aa).

20–25 contacts GTP; sequence GSGKTT. The short motif at 77–79 is the Gly-Pro-Asn (GPN)-loop; involved in dimer interface element; it reads GPN. Residue 179 to 182 coordinates GTP; sequence SKMD.

The protein belongs to the GPN-loop GTPase family. Heterodimers with gpn1 or gpn3. Binds to RNA polymerase II (RNAPII).

In terms of biological role, small GTPase required for proper localization of RNA polymerase II and III (RNAPII and RNAPIII). May act at an RNAP assembly step prior to nuclear import. The chain is GPN-loop GTPase 2 from Danio rerio (Zebrafish).